A 186-amino-acid polypeptide reads, in one-letter code: Large ribosomal subunit protein uL5 (186 aa).

It belongs to the universal ribosomal protein uL5 family. In terms of assembly, part of the 50S ribosomal subunit; part of the 5S rRNA/L5/L18/L25 subcomplex. Contacts the 5S rRNA and the P site tRNA. Forms a bridge to the 30S subunit in the 70S ribosome.

Functionally, this is one of the proteins that bind and probably mediate the attachment of the 5S RNA into the large ribosomal subunit, where it forms part of the central protuberance. In the 70S ribosome it contacts protein S13 of the 30S subunit (bridge B1b), connecting the 2 subunits; this bridge is implicated in subunit movement. Contacts the P site tRNA; the 5S rRNA and some of its associated proteins might help stabilize positioning of ribosome-bound tRNAs. The protein is Large ribosomal subunit protein uL5 of Karelsulcia muelleri (strain GWSS) (Sulcia muelleri).